The primary structure comprises 506 residues: Glutamate--tRNA ligase (506 aa).

A 'HIGH' region motif is present at residues 21–31 (PSPTGIPHVGM). Positions 265–269 (KLSKR) match the 'KMSKS' region motif. Lys268 lines the ATP pocket.

This sequence belongs to the class-I aminoacyl-tRNA synthetase family. Glutamate--tRNA ligase type 1 subfamily. Monomer.

It localises to the cytoplasm. The catalysed reaction is tRNA(Glu) + L-glutamate + ATP = L-glutamyl-tRNA(Glu) + AMP + diphosphate. Its function is as follows. Catalyzes the attachment of glutamate to tRNA(Glu) in a two-step reaction: glutamate is first activated by ATP to form Glu-AMP and then transferred to the acceptor end of tRNA(Glu). In Bifidobacterium adolescentis (strain ATCC 15703 / DSM 20083 / NCTC 11814 / E194a), this protein is Glutamate--tRNA ligase.